We begin with the raw amino-acid sequence, 554 residues long: Valerianol synthase TPS1G (554 aa).

Residues Asp307 and Asp311 each contribute to the Mg(2+) site. The DDXXD motif signature appears at 326-330 (VQRWD). The Mg(2+) site is built by Asp452, Ser456, and Glu460.

This sequence belongs to the terpene synthase family. The cofactor is Mg(2+).

It catalyses the reaction (2E,6E)-farnesyl diphosphate + H2O = valerianol + diphosphate. It functions in the pathway secondary metabolite biosynthesis; terpenoid biosynthesis. In terms of biological role, terpene synthase that catalyzes the biosynthesis of the terpene valerianol, which is a volatile compound of floral scent. The protein is Valerianol synthase TPS1G of Camellia hiemalis (Camellia).